The chain runs to 96 residues: GTPase HRas (96 aa).

Met-1 carries the post-translational modification N-acetylmethionine. At Thr-2 the chain carries N-acetylthreonine; in GTPase HRas, N-terminally processed. 10 to 17 (GAGGVGKS) is a GTP binding site. The Effector region motif lies at 32-40 (YDPTIEDSY). 57–61 (DTAGQ) is a binding site for GTP.

It belongs to the small GTPase superfamily. Ras family. In terms of assembly, in its GTP-bound form interacts with PLCE1. Interacts with TBC1D10C. Interacts with RGL3. Interacts with HSPD1. Found in a complex with at least BRAF, HRAS, MAP2K1, MAPK3 and RGS14. Interacts (active GTP-bound form) with RGS14 (via RBD 1 domain). Forms a signaling complex with RASGRP1 and DGKZ. Interacts with RASSF5. Interacts with PDE6D. Interacts with IKZF3. Interacts with RACK1. Interacts with PIK3CG; the interaction is required for membrane recruitment and beta-gamma G protein dimer-dependent activation of the PI3K gamma complex PIK3CG:PIK3R6. Interacts with RAPGEF2. Interacts (active GTP-bound form) with both SHOC2 and PP1c (all isoforms) to form a tertiary complex; SHOC2 and PP1c preferably bind M-Ras/MRAS, but they also bind K-Ras/KRAS, N-Ras/NRAS and H-Ras/HRAS. Interacts (in GTP-bound form) with Oog1. Interacts (GTP-bound form) with MAPKAP1/SIN1; inhibiting H-Ras/HRAS activity. Post-translationally, ubiquitinated by the BCR(LZTR1) E3 ubiquitin ligase complex at Lys-170 in a non-degradative manner, leading to inhibit Ras signaling by decreasing Ras association with membranes.

It localises to the cell membrane. The protein localises to the golgi apparatus. It is found in the golgi apparatus membrane. The enzyme catalyses GTP + H2O = GDP + phosphate + H(+). Its activity is regulated as follows. Alternates between an inactive form bound to GDP and an active form bound to GTP. Activated by a guanine nucleotide-exchange factor (GEF) and inactivated by a GTPase-activating protein (GAP). Functionally, ras proteins bind GDP/GTP and possess intrinsic GTPase activity. This chain is GTPase HRas (HRAS), found in Mesocricetus auratus (Golden hamster).